The chain runs to 169 residues: Gamma-crystallin 2 (169 aa).

2 Beta/gamma crystallin 'Greek key' domains span residues tyrosine 1–serine 34 and glycine 35–proline 77. Residues glutamine 78–proline 82 form a connecting peptide region. 2 Beta/gamma crystallin 'Greek key' domains span residues histidine 83–glutamate 123 and glycine 124–leucine 166.

Belongs to the beta/gamma-crystallin family. Monomer.

Functionally, crystallins are the dominant structural components of the vertebrate eye lens. In Rana temporaria (European common frog), this protein is Gamma-crystallin 2.